Reading from the N-terminus, the 341-residue chain is S-adenosylmethionine:tRNA ribosyltransferase-isomerase (341 aa).

It belongs to the QueA family. In terms of assembly, monomer.

It is found in the cytoplasm. It catalyses the reaction 7-aminomethyl-7-carbaguanosine(34) in tRNA + S-adenosyl-L-methionine = epoxyqueuosine(34) in tRNA + adenine + L-methionine + 2 H(+). It participates in tRNA modification; tRNA-queuosine biosynthesis. Functionally, transfers and isomerizes the ribose moiety from AdoMet to the 7-aminomethyl group of 7-deazaguanine (preQ1-tRNA) to give epoxyqueuosine (oQ-tRNA). This Desulforamulus reducens (strain ATCC BAA-1160 / DSM 100696 / MI-1) (Desulfotomaculum reducens) protein is S-adenosylmethionine:tRNA ribosyltransferase-isomerase.